The sequence spans 360 residues: Peptide chain release factor 1 (360 aa).

Residue Q235 is modified to N5-methylglutamine. Residues 286–313 (RQQAEASTRRNLLGSGDRSDRNRTYNFP) are disordered.

The protein belongs to the prokaryotic/mitochondrial release factor family. Post-translationally, methylated by PrmC. Methylation increases the termination efficiency of RF1.

The protein resides in the cytoplasm. In terms of biological role, peptide chain release factor 1 directs the termination of translation in response to the peptide chain termination codons UAG and UAA. This chain is Peptide chain release factor 1, found in Cronobacter sakazakii (strain ATCC BAA-894) (Enterobacter sakazakii).